The following is a 64-amino-acid chain: Translational regulator CsrA (64 aa).

Belongs to the CsrA/RsmA family. In terms of assembly, homodimer; the beta-strands of each monomer intercalate to form a hydrophobic core, while the alpha-helices form wings that extend away from the core.

The protein resides in the cytoplasm. In terms of biological role, a key translational regulator that binds mRNA to regulate translation initiation and/or mRNA stability. Mediates global changes in gene expression, shifting from rapid growth to stress survival by linking envelope stress, the stringent response and the catabolite repression systems. Usually binds in the 5'-UTR; binding at or near the Shine-Dalgarno sequence prevents ribosome-binding, repressing translation, binding elsewhere in the 5'-UTR can activate translation and/or stabilize the mRNA. Its function is antagonized by small RNA(s). The sequence is that of Translational regulator CsrA from Thioalkalivibrio sulfidiphilus (strain HL-EbGR7).